Consider the following 284-residue polypeptide: Four and a half LIM domains protein 5 (284 aa).

The C4-type zinc finger occupies 8–32; it reads CQYCTASLLGKKYVLKDDNLYCISC. LIM zinc-binding domains lie at 39-100, 101-160, 161-220, and 221-283; these read NYCE…ECSS, KCFH…KEFA, HYCN…LYAK, and KCAA…ADTD.

In terms of assembly, interacts with CREM (via the third LIM domain). Interacts (via second LIM domain) with SPAG8.

It is found in the nucleus. May be involved in the regulation of spermatogenesis. Stimulates CREM transcriptional activity in a phosphorylation-independent manner. The chain is Four and a half LIM domains protein 5 (Fhl5) from Rattus norvegicus (Rat).